The sequence spans 353 residues: Colistin resistance protein EmrA (353 aa).

Residues 21–41 (WGVFSVLLLFLVAGILYYFFV) form a helical membrane-spanning segment. Residues 132-204 (VVAAQADLAR…QASRAQLLAD (73 aa)) adopt a coiled-coil conformation.

It belongs to the membrane fusion protein (MFP) (TC 8.A.1) family.

Its subcellular location is the cell inner membrane. Probably part of an efflux pump system that contributes to adaptation to osmotic stress and resistance to colistin. This Acinetobacter baumannii (strain ATCC 17978 / DSM 105126 / CIP 53.77 / LMG 1025 / NCDC KC755 / 5377) protein is Colistin resistance protein EmrA.